Consider the following 433-residue polypeptide: UPF0597 protein PG_0909 (433 aa).

Belongs to the UPF0597 family.

This chain is UPF0597 protein PG_0909, found in Porphyromonas gingivalis (strain ATCC BAA-308 / W83).